We begin with the raw amino-acid sequence, 283 residues long: Methyltransferase cpsF (283 aa).

The protein belongs to the methyltransferase superfamily. LaeA methyltransferase family.

It carries out the reaction campesine A + S-adenosyl-L-methionine = campesine B + S-adenosyl-L-homocysteine + H(+). Its pathway is alkaloid biosynthesis. Its function is as follows. Methyltransferase; part of the gene cluster that mediates the biosynthesis of campesine G, a dimeric indole piperazine alkaloid that shows good insecticidal activity Galleria mellonella. Within the pathway, cpsF methylates campesine A at N13 of piperazine ring to produce campesine B. The non-canonical non-ribosomal peptide synthetase cpsA catalyzes the first steps of the pathway by producing L-tryptophanal and L-valinal from their respective amino-acids. These products condensate spontaneously to form trypyl-valyl pyrazine also known as didehydrocampesine A. The NmrA-like family domain-containing oxidoreductase cpsB is the next enzyme in cps pathway and reduces the unstable didehydrocampesine A to campesine A. The methyltransferase cpsF and the acetyltransferase cpsE both recognize N13 of piperazine ring to carry out methylation and acetylation of campesine A to produce campesine C and B, respectively. The cytochrome P450 monooxygenase cpsD then acts as a dimerase that catalyzes oxidative heterocoupling between campesine B and C to produce heterodimers with unexpected 6/5/6/6/6/6/5/6 eight-ring scaffold called campesine D. Finally,the cytochrome P450 monooxygenase cpsC is a regioselective dehydrogenase that catalyzes dehydrogenation reaction towards C2-N1 to produce campesine G. The polypeptide is Methyltransferase cpsF (Aspergillus campestris (strain IBT 28561)).